The primary structure comprises 405 residues: MGVANDSSPEYQWMSPHLNYFKNFNKETLLKIEENDYINSSFFQQKDKRFYPINDDFYHISTGGYGIVFKIDNYVVKFVLEAIKLYSPMEIMAELTVPKFLYNNLKGDEKKLIVCVWAMGLNYKLTFLHTLYKRVLHMLLLLIQTMDGQELSLRYSSKVFLKAFNERKDSIKFVKLLSHFYPAVINSNINVINYFNRMFHFFEHEKGTNYEYERGNIIIFPLTLYSADKVDTELAIKLGFKSLVQYIKFIFLQMALLYIKIYELPCCDNFLHADLKPDNILLFDSNEPIIIHLDKKFVFNERIKSALNDFDFSQVAGIINKKIKNNFKVEHNWYYDFHFFVHTLLKTYPEIEKDIEFSTALEEFIMCTKTDCDKYRLKVSILHPISFLEKFIMRDIFSDWINGGN.

Residues 54 to 405 (NDDFYHISTG…IFSDWINGGN (352 aa)) enclose the Protein kinase domain. ATP-binding positions include 60–68 (ISTGGYGIV) and Lys84. Asp274 serves as the catalytic Proton acceptor.

This sequence belongs to the protein kinase superfamily. Ser/Thr protein kinase family. Poxviruses subfamily. In terms of processing, phosphorylated in vivo. Autophosphorylated in vitro.

It is found in the host endoplasmic reticulum. Its subcellular location is the host endoplasmic reticulum-Golgi intermediate compartment. The enzyme catalyses L-seryl-[protein] + ATP = O-phospho-L-seryl-[protein] + ADP + H(+). It carries out the reaction L-threonyl-[protein] + ATP = O-phospho-L-threonyl-[protein] + ADP + H(+). Essential serine-protein kinase involved in the early stage of virion morphogenesis. This chain is Serine/threonine-protein kinase 2 (OPG054), found in Vaccinia virus (strain L-IVP) (VACV).